A 79-amino-acid polypeptide reads, in one-letter code: Small ribosomal subunit protein bS18 (79 aa).

Part of the 30S ribosomal subunit. Forms a tight heterodimer with protein bS6. Post-translationally, both N-terminus methionine truncation and retention have been observed for this protein. May be methylated up to 6 times, on undetermined residues.

Functionally, binds as a heterodimer with protein bS6 to the central domain of the 16S rRNA, where it helps stabilize the platform of the 30S subunit. The polypeptide is Small ribosomal subunit protein bS18 (Rhodopseudomonas palustris (strain ATCC BAA-98 / CGA009)).